The chain runs to 198 residues: MASAVSGPSTKQVHPFYCAVCSLPTEYCEFGPSVSKCKAWLEEQDKDEYERVWGEGALASRIGTLSLDKQEKLEADAAKLEKKAAKKAEAEAKKKEQTKIIIKRSERTKRKHQTHIQNLELFGVDLKKAAKQFAGKFATGSSVSKTPQGEEEIVIQGDVGDEIVEMIRQQVGALKGVPADQITRVEVKKKKEAEEPAA.

In terms of domain architecture, SUI1 spans 100 to 171 (IIIKRSERTK…EIVEMIRQQV (72 aa)).

Belongs to the DENR family. In terms of assembly, interacts with the 40S ribosomal subunit.

It is found in the cytoplasm. The polypeptide is Translation machinery-associated protein 22 (TMA22) (Cryptococcus neoformans var. neoformans serotype D (strain B-3501A) (Filobasidiella neoformans)).